Here is a 281-residue protein sequence, read N- to C-terminus: Acidic leucine-rich nuclear phosphoprotein 32-related protein (281 aa).

LRR repeat units follow at residues 29–52 (YESLNELILDGKKLTSIKNEEKEL), 56–78 (FKNLERLCLNQTGIQTLENIPSI), 79–103 (ATLNVLELTDNHLSSVEVLKYIVQN), and 105–128 (PNIKTLEIGGNHFKNINDFETLKE). In terms of domain architecture, LRRCT spans 140–178 (NPFADNPNYRKELFEFLPNVKIIDCYNKEGMEVLSSDEE). Over residues 197-244 (FKDEDDEDEEFVPNDNEDDDEDDELDDDLEDEDMEDLDKEDLDKEDYD) the composition is skewed to acidic residues. A disordered region spans residues 197–281 (FKDEDDEDEE…DMDLKKTKLE (85 aa)). Residues 245-266 (IDTKETEGVNKDEKSNKRKQDA) show a composition bias toward basic and acidic residues.

Belongs to the ANP32 family.

The polypeptide is Acidic leucine-rich nuclear phosphoprotein 32-related protein (Plasmodium falciparum (isolate 3D7)).